Here is a 335-residue protein sequence, read N- to C-terminus: MIEADRIISSNAQLGDEYIDRAIRPKLLTDYVGQPQVREQMGIFIQAAKLRQDALDHLLIFGPPGLGKTTLANIVANEMGVNIRTTSGPVLEKAGDLAAMLTNLEPHDVLFIDEIHRLSPAIEEVLYPAMEDYQLDIMIGEGPAARSIKLDLPPFTLIGATTRAGSLTSPLRDRFGIVQRLEFYSVEDLTSIVARSAGCLNLEMSDGASHEIARRSRGTPRIANRLLRRVRDFADVKNAGIISEDIAKSALSMLDIDQAGFDYLDRKLLSAVIERFDGGPVGLDNLAAAIGEERDTIEDVLEPYLIQQGFLQRTPRGRIATSRTYRHFGLDKLTE.

The interval 4 to 184 (ADRIISSNAQ…FGIVQRLEFY (181 aa)) is large ATPase domain (RuvB-L). ATP contacts are provided by residues isoleucine 23, arginine 24, glycine 65, lysine 68, threonine 69, threonine 70, 131–133 (EDY), arginine 174, tyrosine 184, and arginine 221. Threonine 69 serves as a coordination point for Mg(2+). The interval 185–255 (SVEDLTSIVA…IAKSALSMLD (71 aa)) is small ATPAse domain (RuvB-S). The head domain (RuvB-H) stretch occupies residues 258-335 (QAGFDYLDRK…RHFGLDKLTE (78 aa)). DNA contacts are provided by arginine 294, arginine 313, and arginine 318.

Belongs to the RuvB family. Homohexamer. Forms an RuvA(8)-RuvB(12)-Holliday junction (HJ) complex. HJ DNA is sandwiched between 2 RuvA tetramers; dsDNA enters through RuvA and exits via RuvB. An RuvB hexamer assembles on each DNA strand where it exits the tetramer. Each RuvB hexamer is contacted by two RuvA subunits (via domain III) on 2 adjacent RuvB subunits; this complex drives branch migration. In the full resolvosome a probable DNA-RuvA(4)-RuvB(12)-RuvC(2) complex forms which resolves the HJ.

The protein localises to the cytoplasm. The catalysed reaction is ATP + H2O = ADP + phosphate + H(+). The RuvA-RuvB-RuvC complex processes Holliday junction (HJ) DNA during genetic recombination and DNA repair, while the RuvA-RuvB complex plays an important role in the rescue of blocked DNA replication forks via replication fork reversal (RFR). RuvA specifically binds to HJ cruciform DNA, conferring on it an open structure. The RuvB hexamer acts as an ATP-dependent pump, pulling dsDNA into and through the RuvAB complex. RuvB forms 2 homohexamers on either side of HJ DNA bound by 1 or 2 RuvA tetramers; 4 subunits per hexamer contact DNA at a time. Coordinated motions by a converter formed by DNA-disengaged RuvB subunits stimulates ATP hydrolysis and nucleotide exchange. Immobilization of the converter enables RuvB to convert the ATP-contained energy into a lever motion, pulling 2 nucleotides of DNA out of the RuvA tetramer per ATP hydrolyzed, thus driving DNA branch migration. The RuvB motors rotate together with the DNA substrate, which together with the progressing nucleotide cycle form the mechanistic basis for DNA recombination by continuous HJ branch migration. Branch migration allows RuvC to scan DNA until it finds its consensus sequence, where it cleaves and resolves cruciform DNA. In Mannheimia succiniciproducens (strain KCTC 0769BP / MBEL55E), this protein is Holliday junction branch migration complex subunit RuvB.